The primary structure comprises 380 residues: Chorismate synthase (380 aa).

Arginine 47 lines the NADP(+) pocket. FMN-binding positions include 124-126 (RSS), glycine 288, 303-307 (KPTST), and arginine 329.

This sequence belongs to the chorismate synthase family. In terms of assembly, homotetramer. FMNH2 serves as cofactor.

The enzyme catalyses 5-O-(1-carboxyvinyl)-3-phosphoshikimate = chorismate + phosphate. It functions in the pathway metabolic intermediate biosynthesis; chorismate biosynthesis; chorismate from D-erythrose 4-phosphate and phosphoenolpyruvate: step 7/7. Functionally, catalyzes the anti-1,4-elimination of the C-3 phosphate and the C-6 proR hydrogen from 5-enolpyruvylshikimate-3-phosphate (EPSP) to yield chorismate, which is the branch point compound that serves as the starting substrate for the three terminal pathways of aromatic amino acid biosynthesis. This reaction introduces a second double bond into the aromatic ring system. In Leptospira borgpetersenii serovar Hardjo-bovis (strain JB197), this protein is Chorismate synthase.